The sequence spans 195 residues: Probable GTP-binding protein EngB (195 aa).

In terms of domain architecture, EngB-type G spans 24 to 195; the sequence is DWPEIALAGR…EAWEAILRYL (172 aa). GTP is bound by residues 32 to 39, 59 to 63, 77 to 80, 144 to 147, and 176 to 178; these read GRSNVGKS, GKTQL, DVPG, TKAD, and FSS. S39 and T61 together coordinate Mg(2+).

The protein belongs to the TRAFAC class TrmE-Era-EngA-EngB-Septin-like GTPase superfamily. EngB GTPase family. The cofactor is Mg(2+).

In terms of biological role, necessary for normal cell division and for the maintenance of normal septation. The chain is Probable GTP-binding protein EngB from Lactococcus lactis subsp. lactis (strain IL1403) (Streptococcus lactis).